The primary structure comprises 440 residues: 26S proteasome regulatory subunit 4 (440 aa).

The span at Met1 to Gly13 shows a compositional bias: gly residues. Residues Met1–Leu49 are disordered. Gly2 is lipidated: N-myristoyl glycine. A Phosphoserine modification is found at Ser4. Basic and acidic residues predominate over residues Gly14–Glu26. At Thr53 the chain carries Phosphothreonine. The disordered stretch occupies residues Gln84–Gly104. The span at Lys86 to Arg103 shows a compositional bias: basic and acidic residues. ATP is bound at residue Gly226–Thr233. Residue Lys237 forms a Glycyl lysine isopeptide (Lys-Gly) (interchain with G-Cter in ubiquitin) linkage. N6-acetyllysine is present on Lys258. The residue at position 434 (Thr434) is a Phosphothreonine. Tyr439 is subject to Phosphotyrosine.

This sequence belongs to the AAA ATPase family. In terms of assembly, component of the 19S proteasome regulatory particle complex. The 26S proteasome consists of a 20S core particle (CP) and two 19S regulatory subunits (RP). The regulatory particle is made of a lid composed of 9 subunits, a base containing 6 ATPases including PSMC1 and few additional components. Interacts with SCA7. Interacts with NGLY1. Interacts with PAAF1.

The protein resides in the cytoplasm. Its subcellular location is the nucleus. It localises to the membrane. Functionally, component of the 26S proteasome, a multiprotein complex involved in the ATP-dependent degradation of ubiquitinated proteins. This complex plays a key role in the maintenance of protein homeostasis by removing misfolded or damaged proteins, which could impair cellular functions, and by removing proteins whose functions are no longer required. Therefore, the proteasome participates in numerous cellular processes, including cell cycle progression, apoptosis, or DNA damage repair. PSMC1 belongs to the heterohexameric ring of AAA (ATPases associated with diverse cellular activities) proteins that unfolds ubiquitinated target proteins that are concurrently translocated into a proteolytic chamber and degraded into peptides. In Homo sapiens (Human), this protein is 26S proteasome regulatory subunit 4 (PSMC1).